We begin with the raw amino-acid sequence, 140 residues long: Hemoglobin subunit alpha (140 aa).

Residues 1–140 (LSAADKGHVK…VSTVLTSKYR (140 aa)) form the Globin domain. The residue at position 2 (S2) is a Phosphoserine. Residues K6 and K10 each carry the N6-succinyllysine modification. K15 is modified (N6-acetyllysine; alternate). Residue K15 is modified to N6-succinyllysine; alternate. Phosphotyrosine is present on Y23. A Phosphoserine modification is found at S34. K39 is subject to N6-succinyllysine. Phosphoserine is present on S48. An O2-binding site is contributed by H57. Position 86 (H86) interacts with heme b. The residue at position 101 (S101) is a Phosphoserine. T107 carries the phosphothreonine modification. A Phosphoserine modification is found at S123. Phosphothreonine is present on residues T133 and T136. Residue S137 is modified to Phosphoserine.

This sequence belongs to the globin family. Heterotetramer of two alpha chains and two beta chains. In terms of tissue distribution, red blood cells.

In terms of biological role, involved in oxygen transport from the lung to the various peripheral tissues. Functionally, hemopressin acts as an antagonist peptide of the cannabinoid receptor CNR1. Hemopressin-binding efficiently blocks cannabinoid receptor CNR1 and subsequent signaling. This chain is Hemoglobin subunit alpha (HBA), found in Tragelaphus strepsiceros (Greater kudu).